Consider the following 306-residue polypeptide: Curved DNA-binding protein (306 aa).

The region spanning 5–69 (DYYAIMGVKP…QRRAEYDQMW (65 aa)) is the J domain.

The protein localises to the cytoplasm. Its subcellular location is the nucleoid. Its function is as follows. DNA-binding protein that preferentially recognizes a curved DNA sequence. It is probably a functional analog of DnaJ; displays overlapping activities with DnaJ, but functions under different conditions, probably acting as a molecular chaperone in an adaptive response to environmental stresses other than heat shock. Lacks autonomous chaperone activity; binds native substrates and targets them for recognition by DnaK. Its activity is inhibited by the binding of CbpM. This Escherichia coli O127:H6 (strain E2348/69 / EPEC) protein is Curved DNA-binding protein.